The chain runs to 378 residues: MATALPPRLQPVRGNETLREHYQYVGKLAGRLKEASEGSTLTTVLFLVICSFIVLENLMVLIAIWKNNKFHNRMYFFIGNLALCDLLAGIAYKVNILMSGKKTFSLSPTVWFLREGSMFVALGASTCSLLAIAIERHLTMIKMRPYDANKRHRVFLLIGMCWLIAFTLGALPILGWNCLHNLPDCSTILPLYSKKYIAFCISIFTAILVTIVILYARIYFLVKSSSRKVANHNNSERSMALLRTVVIVVSVFIACWSPLFILFLIDVACRVQACPILFKAQWFIVLAVLNSAMNPVIYTLASKEMRRAFFRLVCNCLVRGRGARASPIQPALDPSRSKSSSSNNSSHSPKVKEDLPHTAPSSCIMDKNAALQNGIFCN.

The Extracellular portion of the chain corresponds to 1–40; that stretch reads MATALPPRLQPVRGNETLREHYQYVGKLAGRLKEASEGST. N-linked (GlcNAc...) asparagine glycosylation is present at N15. A helical transmembrane segment spans residues 41–65; that stretch reads LTTVLFLVICSFIVLENLMVLIAIW. Topologically, residues 66 to 72 are cytoplasmic; that stretch reads KNNKFHN. A helical transmembrane segment spans residues 73–101; sequence RMYFFIGNLALCDLLAGIAYKVNILMSGK. The Extracellular segment spans residues 102–115; it reads KTFSLSPTVWFLRE. Residues 116–134 form a helical membrane-spanning segment; sequence GSMFVALGASTCSLLAIAI. The Cytoplasmic portion of the chain corresponds to 135–153; that stretch reads ERHLTMIKMRPYDANKRHR. Residues 154 to 179 traverse the membrane as a helical segment; the sequence is VFLLIGMCWLIAFTLGALPILGWNCL. At 180–195 the chain is on the extracellular side; the sequence is HNLPDCSTILPLYSKK. A helical transmembrane segment spans residues 196 to 216; it reads YIAFCISIFTAILVTIVILYA. The Cytoplasmic segment spans residues 217-243; it reads RIYFLVKSSSRKVANHNNSERSMALLR. Residues 244 to 265 traverse the membrane as a helical segment; that stretch reads TVVIVVSVFIACWSPLFILFLI. At 266–281 the chain is on the extracellular side; that stretch reads DVACRVQACPILFKAQ. The helical transmembrane segment at 282 to 302 threads the bilayer; that stretch reads WFIVLAVLNSAMNPVIYTLAS. At 303-378 the chain is on the cytoplasmic side; sequence KEMRRAFFRL…AALQNGIFCN (76 aa). S326 carries the phosphoserine modification. Residues 327 to 357 form a disordered region; the sequence is PIQPALDPSRSKSSSSNNSSHSPKVKEDLPH. Over residues 337-348 the composition is skewed to low complexity; the sequence is SKSSSSNNSSHS.

This sequence belongs to the G-protein coupled receptor 1 family. In terms of tissue distribution, expressed in all tissues, but most abundantly in heart, placenta, kidney, and liver.

The protein resides in the cell membrane. Its function is as follows. Receptor for the lysosphingolipid sphingosine 1-phosphate (S1P). S1P is a bioactive lysophospholipid that elicits diverse physiological effect on most types of cells and tissues. When expressed in rat HTC4 hepatoma cells, is capable of mediating S1P-induced cell proliferation and suppression of apoptosis. The protein is Sphingosine 1-phosphate receptor 3 of Homo sapiens (Human).